A 262-amino-acid chain; its full sequence is Adenosylcobinamide-GDP ribazoletransferase (262 aa).

5 consecutive transmembrane segments (helical) span residues 41 to 61 (AFPLAAILITLPAAAIAFILG), 65 to 85 (ASSLFSAFLVVAVQAMVTGAL), 115 to 132 (IGTYGAVALILSFGLRVS), 134 to 156 (LAAFLPLLTPTGGGIALLATAAL), and 195 to 215 (GVLLALVLFFLAGIPTVAVWL).

This sequence belongs to the CobS family. Mg(2+) is required as a cofactor.

Its subcellular location is the cell inner membrane. The enzyme catalyses alpha-ribazole + adenosylcob(III)inamide-GDP = adenosylcob(III)alamin + GMP + H(+). The catalysed reaction is alpha-ribazole 5'-phosphate + adenosylcob(III)inamide-GDP = adenosylcob(III)alamin 5'-phosphate + GMP + H(+). The protein operates within cofactor biosynthesis; adenosylcobalamin biosynthesis; adenosylcobalamin from cob(II)yrinate a,c-diamide: step 7/7. In terms of biological role, joins adenosylcobinamide-GDP and alpha-ribazole to generate adenosylcobalamin (Ado-cobalamin). Also synthesizes adenosylcobalamin 5'-phosphate from adenosylcobinamide-GDP and alpha-ribazole 5'-phosphate. The protein is Adenosylcobinamide-GDP ribazoletransferase of Rhizobium meliloti (strain 1021) (Ensifer meliloti).